Reading from the N-terminus, the 147-residue chain is Large ribosomal subunit protein uL13 (147 aa).

It belongs to the universal ribosomal protein uL13 family. In terms of assembly, part of the 50S ribosomal subunit.

This protein is one of the early assembly proteins of the 50S ribosomal subunit, although it is not seen to bind rRNA by itself. It is important during the early stages of 50S assembly. This Pseudothermotoga lettingae (strain ATCC BAA-301 / DSM 14385 / NBRC 107922 / TMO) (Thermotoga lettingae) protein is Large ribosomal subunit protein uL13.